Reading from the N-terminus, the 157-residue chain is MSKNVSRNCLGSMEDIKKVFQRFDKNNDGKISIDELKDVIGALSPNASQEETKAMMKEFDLDGNGFIDLDEFVALFQISDQSSNNSAIRDLKEAFDLYDLDRNGRISANELHSVMKNLGEKCSIQDCQRMINKVDSDGDGCVDFEEFKKMMMINGSA.

EF-hand domains lie at 11 to 46 (GSMEDIKKVFQRFDKNNDGKISIDELKDVIGALSPN), 47 to 82 (ASQEETKAMMKEFDLDGNGFIDLDEFVALFQISDQS), 86 to 121 (SAIRDLKEAFDLYDLDRNGRISANELHSVMKNLGEK), and 122 to 157 (CSIQDCQRMINKVDSDGDGCVDFEEFKKMMMINGSA). Ca(2+) contacts are provided by D24, N26, D28, K30, E35, D60, D62, N64, E71, D99, D101, N103, R105, E110, D135, D137, D139, C141, and E146.

Its function is as follows. Potential calcium sensor. The sequence is that of Probable calcium-binding protein CML23 (CML23) from Arabidopsis thaliana (Mouse-ear cress).